We begin with the raw amino-acid sequence, 74 residues long: LMTGVESARDAYIAKPHNCVYECFDAFSSYCNGVCTKNGAKSGYCQILGTYGNGCWCIALPGNVPIRIPGKCHR.

Positions 1–7 (LMTGVES) are cleaved as a signal peptide. In terms of domain architecture, LCN-type CS-alpha/beta spans 9–73 (RDAYIAKPHN…VPIRIPGKCH (65 aa)). 4 disulfide bridges follow: cysteine 19–cysteine 72, cysteine 23–cysteine 45, cysteine 31–cysteine 55, and cysteine 35–cysteine 57. A propeptide (removed by a carboxypeptidase) is located at residue arginine 74.

Belongs to the long (4 C-C) scorpion toxin superfamily. Sodium channel inhibitor family. Alpha subfamily. In terms of tissue distribution, expressed by the venom gland.

It localises to the secreted. Alpha toxins bind voltage-independently at site-3 of sodium channels (Nav) and inhibit the inactivation of the activated channels, thereby blocking neuronal transmission. The protein is Sodium channel neurotoxin MeuNaTxalpha-6 of Mesobuthus eupeus (Lesser Asian scorpion).